We begin with the raw amino-acid sequence, 428 residues long: 3-phosphoshikimate 1-carboxyvinyltransferase (428 aa).

3-phosphoshikimate-binding residues include Lys21, Ser22, and Arg26. Lys21 contacts phosphoenolpyruvate. Positions 93 and 121 each coordinate phosphoenolpyruvate. 4 residues coordinate 3-phosphoshikimate: Ser166, Gln168, Asp314, and Lys341. Gln168 provides a ligand contact to phosphoenolpyruvate. Asp314 acts as the Proton acceptor in catalysis. Positions 345 and 388 each coordinate phosphoenolpyruvate.

This sequence belongs to the EPSP synthase family. Monomer.

The protein localises to the cytoplasm. The catalysed reaction is 3-phosphoshikimate + phosphoenolpyruvate = 5-O-(1-carboxyvinyl)-3-phosphoshikimate + phosphate. The protein operates within metabolic intermediate biosynthesis; chorismate biosynthesis; chorismate from D-erythrose 4-phosphate and phosphoenolpyruvate: step 6/7. Its function is as follows. Catalyzes the transfer of the enolpyruvyl moiety of phosphoenolpyruvate (PEP) to the 5-hydroxyl of shikimate-3-phosphate (S3P) to produce enolpyruvyl shikimate-3-phosphate and inorganic phosphate. The protein is 3-phosphoshikimate 1-carboxyvinyltransferase of Syntrophomonas wolfei subsp. wolfei (strain DSM 2245B / Goettingen).